The following is a 244-amino-acid chain: Vesicle-associated membrane protein-associated protein SCS2 (244 aa).

Ser-2 bears the N-acetylserine mark. Topologically, residues 2-222 are cytoplasmic; that stretch reads SAVEISPDVL…EAATVPAENE (221 aa). The MSP domain occupies 3-126; that stretch reads AVEISPDVLV…ISKKIKVKYL (124 aa). Ser-106 carries the post-translational modification Phosphoserine. Residues 135–219 form a disordered region; it reads QNQNIQENKE…QIKEAATVPA (85 aa). Positions 153-168 are enriched in basic and acidic residues; that stretch reads SEPKEVPAVVNEKEVP. A compositionally biased stretch (polar residues) spans 199 to 211; sequence QTSNSTPAPQNQI. The chain crosses the membrane as a helical; Anchor for type IV membrane protein span at residues 223–243; the sequence is SSSMGIFILVALLILVLGWFY. Residue Arg-244 is a topological domain, lumenal.

This sequence belongs to the VAMP-associated protein (VAP) (TC 9.B.17) family. In terms of assembly, interacts with OPI1. Also interacts with PBI1. Interacts with EPO1.

It is found in the endoplasmic reticulum membrane. Its subcellular location is the nucleus membrane. Functionally, acts as an endoplasmic reticulum (ER) membrane anchor for cytoplasmic proteins via binding to the FFAT motif of targeted proteins. Regulates phospholipid biosynthesis by modulating the subcellular localization of the transcriptional repressor OPI1. Also contributes to the tethering of the ER to the plasma membrane. Allows interorganelle phosphatidylserine (PtdSer) transport via a process that involves the acceptor membrane complex PDR17-PDS2 that binds to PBI1 which in turn ligates to SCS2 and phosphatidic acid present in the donor membrane, forming a zone of apposition that facilitates PtdSer transfer. This Saccharomyces cerevisiae (strain ATCC 204508 / S288c) (Baker's yeast) protein is Vesicle-associated membrane protein-associated protein SCS2.